Reading from the N-terminus, the 254-residue chain is MNTIGVLKVSGHELDDPHFLAGLTGVIRTMTQPLVLVHGGGKEISAAVEQAGLPVEFVDGLRVTTPEVMAIMQMVVCGSINKRIVTALVNAGVRALGLSGLDIGLLRCEPYRPNGRDLGRVGVVTEVDGAALRHMLTLGWLPVIAPVALGSADGLSYNVNADMVAESIAGTLGTTELIFVSNVPGVLVDGQVVPRLTPAAVEDYIASGVISGGMIPKVRSALAALRRGATSVRIVNLAGLRDGGTRFVTEEAGS.

Substrate contacts are provided by residues 40 to 41 (GG), Arg62, and Asn158.

Belongs to the acetylglutamate kinase family. ArgB subfamily.

It is found in the cytoplasm. The catalysed reaction is N-acetyl-L-glutamate + ATP = N-acetyl-L-glutamyl 5-phosphate + ADP. It functions in the pathway amino-acid biosynthesis; L-arginine biosynthesis; N(2)-acetyl-L-ornithine from L-glutamate: step 2/4. Catalyzes the ATP-dependent phosphorylation of N-acetyl-L-glutamate. This is Acetylglutamate kinase from Chloroflexus aggregans (strain MD-66 / DSM 9485).